Here is a 534-residue protein sequence, read N- to C-terminus: NAD(P)H-quinone oxidoreductase chain 4 (534 aa).

Transmembrane regions (helical) follow at residues Phe-6–Ile-26, Trp-38–Gln-58, Met-91–Val-111, Leu-117–Asp-137, Leu-138–Ile-158, Phe-171–Phe-191, Leu-214–His-234, Thr-245–Ile-265, Phe-279–Phe-299, Met-316–Leu-336, Gln-337–Asp-357, Ile-377–Ala-399, Val-419–Met-439, and Ile-466–Ile-486.

It belongs to the complex I subunit 4 family.

The protein resides in the cellular thylakoid membrane. It catalyses the reaction a plastoquinone + NADH + (n+1) H(+)(in) = a plastoquinol + NAD(+) + n H(+)(out). The enzyme catalyses a plastoquinone + NADPH + (n+1) H(+)(in) = a plastoquinol + NADP(+) + n H(+)(out). In terms of biological role, NDH-1 shuttles electrons from NAD(P)H, via FMN and iron-sulfur (Fe-S) centers, to quinones in the respiratory chain. The immediate electron acceptor for the enzyme in this species is believed to be plastoquinone. Couples the redox reaction to proton translocation (for every two electrons transferred, four hydrogen ions are translocated across the cytoplasmic membrane), and thus conserves the redox energy in a proton gradient. This Acaryochloris marina (strain MBIC 11017) protein is NAD(P)H-quinone oxidoreductase chain 4.